A 362-amino-acid polypeptide reads, in one-letter code: S-adenosylmethionine decarboxylase proenzyme (362 aa).

Catalysis depends on residues Glu11 and Glu14. The active-site Schiff-base intermediate with substrate; via pyruvic acid is the Ser71. Pyruvic acid (Ser); by autocatalysis is present on Ser71. Catalysis depends on Cys85, which acts as the Proton donor; for catalytic activity. Catalysis depends on proton acceptor; for processing activity residues Ser234 and His247.

It belongs to the eukaryotic AdoMetDC family. Pyruvate serves as cofactor. Post-translationally, is synthesized initially as an inactive proenzyme. Formation of the active enzyme involves a self-maturation process in which the active site pyruvoyl group is generated from an internal serine residue via an autocatalytic post-translational modification. Two non-identical subunits are generated from the proenzyme in this reaction, and the pyruvate is formed at the N-terminus of the alpha chain, which is derived from the carboxyl end of the proenzyme. The post-translation cleavage follows an unusual pathway, termed non-hydrolytic serinolysis, in which the side chain hydroxyl group of the serine supplies its oxygen atom to form the C-terminus of the beta chain, while the remainder of the serine residue undergoes an oxidative deamination to produce ammonia and the pyruvoyl group blocking the N-terminus of the alpha chain.

The catalysed reaction is S-adenosyl-L-methionine + H(+) = S-adenosyl 3-(methylsulfanyl)propylamine + CO2. Its pathway is amine and polyamine biosynthesis; S-adenosylmethioninamine biosynthesis; S-adenosylmethioninamine from S-adenosyl-L-methionine: step 1/1. The polypeptide is S-adenosylmethionine decarboxylase proenzyme (SAMDC) (Ipomoea nil (Japanese morning glory)).